Reading from the N-terminus, the 595-residue chain is Aspartate--tRNA ligase (595 aa).

Glutamate 171 serves as a coordination point for L-aspartate. The tract at residues 195-198 (QLFK) is aspartate. Arginine 217 serves as a coordination point for L-aspartate. Residues 217–219 (RDE) and glutamine 226 contribute to the ATP site. Residue histidine 448 coordinates L-aspartate. Position 482 (glutamate 482) interacts with ATP. Arginine 489 contacts L-aspartate. Position 534-537 (534-537 (GLDR)) interacts with ATP.

Belongs to the class-II aminoacyl-tRNA synthetase family. Type 1 subfamily. As to quaternary structure, homodimer.

It localises to the cytoplasm. The catalysed reaction is tRNA(Asp) + L-aspartate + ATP = L-aspartyl-tRNA(Asp) + AMP + diphosphate. Catalyzes the attachment of L-aspartate to tRNA(Asp) in a two-step reaction: L-aspartate is first activated by ATP to form Asp-AMP and then transferred to the acceptor end of tRNA(Asp). This is Aspartate--tRNA ligase from Erwinia tasmaniensis (strain DSM 17950 / CFBP 7177 / CIP 109463 / NCPPB 4357 / Et1/99).